Consider the following 334-residue polypeptide: Adenine deaminase (334 aa).

Zn(2+) is bound by residues His17, His19, and His197. The active-site Proton donor is the Glu200. Asp278 provides a ligand contact to Zn(2+). Residue Asp279 coordinates substrate.

Belongs to the metallo-dependent hydrolases superfamily. Adenosine and AMP deaminases family. Adenine deaminase type 2 subfamily. The cofactor is Zn(2+).

It carries out the reaction adenine + H2O + H(+) = hypoxanthine + NH4(+). Catalyzes the hydrolytic deamination of adenine to hypoxanthine. Plays an important role in the purine salvage pathway and in nitrogen catabolism. The protein is Adenine deaminase of Rhodospirillum rubrum (strain ATCC 11170 / ATH 1.1.1 / DSM 467 / LMG 4362 / NCIMB 8255 / S1).